The primary structure comprises 503 residues: ATP synthase subunit alpha (503 aa).

Position 169 to 176 (169 to 176 (GDRKTGKT)) interacts with ATP.

This sequence belongs to the ATPase alpha/beta chains family. As to quaternary structure, F-type ATPases have 2 components, CF(1) - the catalytic core - and CF(0) - the membrane proton channel. CF(1) has five subunits: alpha(3), beta(3), gamma(1), delta(1), epsilon(1). CF(0) has three main subunits: a(1), b(2) and c(9-12). The alpha and beta chains form an alternating ring which encloses part of the gamma chain. CF(1) is attached to CF(0) by a central stalk formed by the gamma and epsilon chains, while a peripheral stalk is formed by the delta and b chains.

Its subcellular location is the cell membrane. The enzyme catalyses ATP + H2O + 4 H(+)(in) = ADP + phosphate + 5 H(+)(out). Functionally, produces ATP from ADP in the presence of a proton gradient across the membrane. The alpha chain is a regulatory subunit. The polypeptide is ATP synthase subunit alpha (Lactobacillus johnsonii (strain CNCM I-12250 / La1 / NCC 533)).